The primary structure comprises 390 residues: 5-hydroxytryptamine receptor 1B (390 aa).

Residues 1 to 46 (MEEPGAQCAPPPPAGSETWVPQANLSSAPSQNCSAKDYIYQDSISL) lie on the Extracellular side of the membrane. N-linked (GlcNAc...) asparagine glycosylation is found at N24 and N32. The chain crosses the membrane as a helical span at residues 47-72 (PWKVLLVMLLALITLATTLSNAFVIA). Over 73–86 (TVYRTRKLHTPANY) the chain is Cytoplasmic. Residues 87–111 (LIASLAVTDLLVSILVMPISTMYTV) traverse the membrane as a helical segment. Residues 112–119 (TGRWTLGQ) are Extracellular-facing. The helical transmembrane segment at 120–145 (VVCDFWLSSDITCCTASILHLCVIAL) threads the bilayer. C122 and C199 are oxidised to a cystine. 2 residues coordinate ergotamine: D129 and T134. A DRY motif; important for ligand-induced conformation changes and signaling motif is present at residues 146-148 (DRY). At 146 to 165 (DRYWAITDAVEYSAKRTPKR) the chain is on the cytoplasmic side. A helical transmembrane segment spans residues 166 to 184 (AAVMIALVWVFSISISLPP). At 185–205 (FFWRQAKAEEEVSECVVNTDH) the chain is on the extracellular side. V201 is a binding site for ergotamine. Residues 206-229 (ILYTVYSTVGAFYFPTLLLIALYG) form a helical membrane-spanning segment. The Cytoplasmic portion of the chain corresponds to 230–315 (RIYVEARSRI…AARERKATKT (86 aa)). Polar residues predominate over residues 259-272 (DSPGSTSSVTSINS). Residues 259 to 281 (DSPGSTSSVTSINSRVPDVPSES) are disordered. A helical membrane pass occupies residues 316-337 (LGIILGAFIVCWLPFFIISLVM). The Extracellular portion of the chain corresponds to 338-347 (PICKDACWFH). The chain crosses the membrane as a helical span at residues 348–370 (LAIFDFFTWLGYLNSLINPIIYT). An NPxxY motif; important for ligand-induced conformation changes and signaling motif is present at residues 365–369 (NPIIY). Topologically, residues 371–390 (MSNEDFKQAFHKLIRFKCTS) are cytoplasmic. C388 carries S-palmitoyl cysteine lipidation.

This sequence belongs to the G-protein coupled receptor 1 family. As to quaternary structure, homodimer. Heterodimer with HTR1D. Post-translationally, phosphorylated. Desensitization of the receptor may be mediated by its phosphorylation. Palmitoylated. As to expression, detected in cerebral artery smooth muscle cells (at protein level). Detected in brain cortex, striatum, amygdala, medulla, hippocampus, caudate nucleus and putamen.

Its subcellular location is the cell membrane. Its function is as follows. G-protein coupled receptor for 5-hydroxytryptamine (serotonin). Also functions as a receptor for ergot alkaloid derivatives, various anxiolytic and antidepressant drugs and other psychoactive substances, such as lysergic acid diethylamide (LSD). Ligand binding causes a conformation change that triggers signaling via guanine nucleotide-binding proteins (G proteins) and modulates the activity of downstream effectors, such as adenylate cyclase. HTR1B is coupled to G(i)/G(o) G alpha proteins and mediates inhibitory neurotransmission by inhibiting adenylate cyclase activity. Arrestin family members inhibit signaling via G proteins and mediate activation of alternative signaling pathways. Regulates the release of 5-hydroxytryptamine, dopamine and acetylcholine in the brain, and thereby affects neural activity, nociceptive processing, pain perception, mood and behavior. Besides, plays a role in vasoconstriction of cerebral arteries. The protein is 5-hydroxytryptamine receptor 1B of Homo sapiens (Human).